We begin with the raw amino-acid sequence, 827 residues long: 4-hydroxy-3-methylbut-2-enyl diphosphate reductase (827 aa).

The 4-hydroxy-3-methylbut-2-enyl diphosphate reductase stretch occupies residues 1–284; that stretch reads MEIIRAKHMG…MNIEKKVRGI (284 aa). Cys-12 contributes to the [4Fe-4S] cluster binding site. Residues His-40 and His-79 each coordinate (2E)-4-hydroxy-3-methylbut-2-enyl diphosphate. Residues His-40 and His-79 each coordinate dimethylallyl diphosphate. 2 residues coordinate isopentenyl diphosphate: His-40 and His-79. Cys-101 provides a ligand contact to [4Fe-4S] cluster. His-129 contributes to the (2E)-4-hydroxy-3-methylbut-2-enyl diphosphate binding site. His-129 serves as a coordination point for dimethylallyl diphosphate. Isopentenyl diphosphate is bound at residue His-129. Glu-131 serves as the catalytic Proton donor. Position 168 (Thr-168) interacts with (2E)-4-hydroxy-3-methylbut-2-enyl diphosphate. Cys-196 provides a ligand contact to [4Fe-4S] cluster. Positions 224, 225, 226, and 268 each coordinate (2E)-4-hydroxy-3-methylbut-2-enyl diphosphate. Residues Ser-224, Ser-225, Asn-226, and Ser-268 each contribute to the dimethylallyl diphosphate site. Residues Ser-224, Ser-225, Asn-226, and Ser-268 each contribute to the isopentenyl diphosphate site. S1 motif domains are found at residues 477-545, 562-632, 649-716, and 733-802; these read GQIV…LSIK, DDEI…LGIK, DTVI…GSLK, and GTTV…LSIK.

The protein in the N-terminal section; belongs to the IspH family. Requires [4Fe-4S] cluster as cofactor.

The catalysed reaction is isopentenyl diphosphate + 2 oxidized [2Fe-2S]-[ferredoxin] + H2O = (2E)-4-hydroxy-3-methylbut-2-enyl diphosphate + 2 reduced [2Fe-2S]-[ferredoxin] + 2 H(+). The enzyme catalyses dimethylallyl diphosphate + 2 oxidized [2Fe-2S]-[ferredoxin] + H2O = (2E)-4-hydroxy-3-methylbut-2-enyl diphosphate + 2 reduced [2Fe-2S]-[ferredoxin] + 2 H(+). It participates in isoprenoid biosynthesis; dimethylallyl diphosphate biosynthesis; dimethylallyl diphosphate from (2E)-4-hydroxy-3-methylbutenyl diphosphate: step 1/1. It functions in the pathway isoprenoid biosynthesis; isopentenyl diphosphate biosynthesis via DXP pathway; isopentenyl diphosphate from 1-deoxy-D-xylulose 5-phosphate: step 6/6. In terms of biological role, catalyzes the conversion of 1-hydroxy-2-methyl-2-(E)-butenyl 4-diphosphate (HMBPP) into a mixture of isopentenyl diphosphate (IPP) and dimethylallyl diphosphate (DMAPP). Acts in the terminal step of the DOXP/MEP pathway for isoprenoid precursor biosynthesis. This chain is 4-hydroxy-3-methylbut-2-enyl diphosphate reductase, found in Fusobacterium nucleatum subsp. nucleatum (strain ATCC 25586 / DSM 15643 / BCRC 10681 / CIP 101130 / JCM 8532 / KCTC 2640 / LMG 13131 / VPI 4355).